Reading from the N-terminus, the 31-residue chain is Cytochrome b6-f complex subunit 6 (31 aa).

Residues 3-23 (ILISYFCFLLIFFLFTLILFF) form a helical membrane-spanning segment.

It belongs to the PetL family. The 4 large subunits of the cytochrome b6-f complex are cytochrome b6, subunit IV (17 kDa polypeptide, PetD), cytochrome f and the Rieske protein, while the 4 small subunits are PetG, PetL, PetM and PetN. The complex functions as a dimer.

It localises to the plastid. Its subcellular location is the chloroplast thylakoid membrane. Functionally, component of the cytochrome b6-f complex, which mediates electron transfer between photosystem II (PSII) and photosystem I (PSI), cyclic electron flow around PSI, and state transitions. PetL is important for photoautotrophic growth as well as for electron transfer efficiency and stability of the cytochrome b6-f complex. The sequence is that of Cytochrome b6-f complex subunit 6 from Gnetum parvifolium (Small-leaved jointfir).